The primary structure comprises 466 residues: Probable Xaa-Pro aminopeptidase pepP (466 aa).

Residues aspartate 264, aspartate 275, glutamate 398, and glutamate 438 each contribute to the Mn(2+) site.

It belongs to the peptidase M24B family. The cofactor is Mn(2+).

The catalysed reaction is Release of any N-terminal amino acid, including proline, that is linked to proline, even from a dipeptide or tripeptide.. In terms of biological role, catalyzes the removal of a penultimate prolyl residue from the N-termini of peptides. This Aspergillus niger (strain ATCC MYA-4892 / CBS 513.88 / FGSC A1513) protein is Probable Xaa-Pro aminopeptidase pepP (pepP).